The primary structure comprises 299 residues: uncharacterized protein (299 aa).

The tract at residues 1-44 (MSDSNLTNPIKAFFHDEFPEQYQEPPGLQKNMKPVPDCGEKSYK) is disordered. 55 to 79 (LVTGGDSGIGRAAAIAYAREGADVA) provides a ligand contact to NADP(+). Serine 188 provides a ligand contact to substrate. Tyrosine 201 functions as the Proton acceptor in the catalytic mechanism.

It belongs to the short-chain dehydrogenases/reductases (SDR) family.

This is an uncharacterized protein from Bacillus subtilis (strain 168).